The following is a 594-amino-acid chain: MKLIKNRVQILRERLNYLEYLYYVKSESKVSDEEYDILLEELRQLEFKYPYLITKSSSTQSISNVCDNSLNRIRHQKPMLSLNSIRDKSQLLLFDKRIKYKLSNHYNINQNLIVYCCELKIDGVALSILYKQGKLVHAATRGDGKIGENVTKNVNAIDSIPKNLKKNNNEILPDLLEIRGEIFISKLSFSKLNQEMLSSGKKVFSNARNAASGSLRQLDPHVTELRSLVFCCYGISYYAGLKQLPNSHWGRLKLCNRWGLSINNYIQIVSGIDPVLEYYNYVRKIRSELEYQIDGIVIKIDNCIYQDQLGCGFRAPNWAVAYKFPAELKLTKLNDVVFKVGRTGLITPIAYINPVVIGNVIIKKVNMHNVNEVKRLNLMIGDTVIVQRSGDVIPKILKIILENRVDNAKFIKIPEFCPSCGSILKVEDNKSSVLRCLAKLTCLAQRKSALKHFASRKAMNIQGMGSRVINQLVDKGLICTPVDFFSLSKEKLLCLDRYGEKSAERLLQSILIAKEITLSAFIYALGIPGVGESVSNKLAYMYRTIENLMNADLQSFLQLKFIGKIAAMNIYSFLHQSDNYNNIQGLIRSNLIFK.

NAD(+) is bound by residues 32–36 (DEEYD), 81–82 (SL), and Glu118. Residue Lys120 is the N6-AMP-lysine intermediate of the active site. NAD(+) is bound by residues Arg141, Glu181, Lys299, and Lys323. Zn(2+) contacts are provided by Cys417, Cys420, Cys436, and Cys442.

Belongs to the NAD-dependent DNA ligase family. LigA subfamily. Requires Mg(2+) as cofactor. Mn(2+) serves as cofactor.

The catalysed reaction is NAD(+) + (deoxyribonucleotide)n-3'-hydroxyl + 5'-phospho-(deoxyribonucleotide)m = (deoxyribonucleotide)n+m + AMP + beta-nicotinamide D-nucleotide.. In terms of biological role, DNA ligase that catalyzes the formation of phosphodiester linkages between 5'-phosphoryl and 3'-hydroxyl groups in double-stranded DNA using NAD as a coenzyme and as the energy source for the reaction. It is essential for DNA replication and repair of damaged DNA. The chain is DNA ligase from Blochmanniella floridana.